Here is a 181-residue protein sequence, read N- to C-terminus: RNA pyrophosphohydrolase (181 aa).

The Nudix hydrolase domain occupies 6-148; it reads GFRPNVGIIV…KRQVYRQALQ (143 aa). The Nudix box signature appears at 38 to 59; that stretch reads GGVEANETPLEALYRELREEVG.

This sequence belongs to the Nudix hydrolase family. RppH subfamily. It depends on a divalent metal cation as a cofactor.

Functionally, accelerates the degradation of transcripts by removing pyrophosphate from the 5'-end of triphosphorylated RNA, leading to a more labile monophosphorylated state that can stimulate subsequent ribonuclease cleavage. The chain is RNA pyrophosphohydrolase from Halorhodospira halophila (strain DSM 244 / SL1) (Ectothiorhodospira halophila (strain DSM 244 / SL1)).